Reading from the N-terminus, the 378-residue chain is Phosphatidyl-myo-inositol mannosyltransferase (378 aa).

Residues Y9 and G16 each coordinate GDP-alpha-D-mannose. A 1,2-diacyl-sn-glycero-3-phospho-(1D-myo-inositol) is bound by residues Q18, 62 to 63, and R68; that span reads YN. Residues R196, 201 to 202, 251 to 253, K256, 274 to 278, and E282 each bind GDP-alpha-D-mannose; these read RK, VDD, and ESFGI.

Belongs to the glycosyltransferase group 1 family. As to quaternary structure, monomer. It depends on Mg(2+) as a cofactor.

The protein resides in the cell membrane. The catalysed reaction is a 1,2-diacyl-sn-glycero-3-phospho-(1D-myo-inositol) + GDP-alpha-D-mannose = a 1,2-diacyl-sn-glycero-3-phospho-[alpha-D-mannopyranosyl-(1&lt;-&gt;6)-D-myo-inositol] + GDP + H(+). It functions in the pathway phospholipid metabolism; phosphatidylinositol metabolism. Its function is as follows. Involved in the biosynthesis of phosphatidyl-myo-inositol mannosides (PIM) which are early precursors in the biosynthesis of lipomannans (LM) and lipoarabinomannans (LAM). Catalyzes the addition of a mannosyl residue from GDP-D-mannose (GDP-Man) to the position 2 of the carrier lipid phosphatidyl-myo-inositol (PI) to generate a phosphatidyl-myo-inositol bearing an alpha-1,2-linked mannose residue (PIM1). The polypeptide is Phosphatidyl-myo-inositol mannosyltransferase (Mycobacterium bovis (strain ATCC BAA-935 / AF2122/97)).